A 101-amino-acid polypeptide reads, in one-letter code: Urease subunit gamma (101 aa).

This sequence belongs to the urease gamma subunit family. Heterotrimer of UreA (gamma), UreB (beta) and UreC (alpha) subunits. Three heterotrimers associate to form the active enzyme.

It is found in the cytoplasm. The catalysed reaction is urea + 2 H2O + H(+) = hydrogencarbonate + 2 NH4(+). It functions in the pathway nitrogen metabolism; urea degradation; CO(2) and NH(3) from urea (urease route): step 1/1. This chain is Urease subunit gamma, found in Ureaplasma parvum serovar 3 (strain ATCC 27815 / 27 / NCTC 11736).